A 158-amino-acid polypeptide reads, in one-letter code: Endoribonuclease YbeY (158 aa).

Residues H117, H121, and H127 each contribute to the Zn(2+) site.

It belongs to the endoribonuclease YbeY family. Zn(2+) serves as cofactor.

It localises to the cytoplasm. In terms of biological role, single strand-specific metallo-endoribonuclease involved in late-stage 70S ribosome quality control and in maturation of the 3' terminus of the 16S rRNA. This chain is Endoribonuclease YbeY, found in Buchnera aphidicola subsp. Schizaphis graminum (strain Sg).